We begin with the raw amino-acid sequence, 377 residues long: NADP-dependent oxidoreductase lnbE (377 aa).

Residues 170 to 173 (GGNG), 257 to 263 (LTNPRVS), and 293 to 295 (SPV) contribute to the NADP(+) site.

It belongs to the NADP-dependent oxidoreductase L4BD family.

It participates in secondary metabolite biosynthesis. Functionally, NADP-dependent oxidoreductase; part of the lnb gene cluster that mediates the biosynthesis of diastereomeric piperazines. Lna and lnb clusters encode sets of enzymes that produce overlapping sets of previously undescribed metabolites such as piperazinomycin-like metabolites or morpholine. The lna and lnb biosynthetic pathways appear to be part of a signaling network that controls the formation of sclerotia, a resilient overwintering structure. One primary function of the non-canonical nonribosomal peptide synthetases lnaA and lnbA consists in the reduction of L-tyrosine. The presence in the clusters of tailoring enzymes such as the oxidoreductases lnaB, lnbB, lnaE or lnbE, as well as of the cytochrome P450 monooxygenases lnaC, lnaD, or lnbC, might explain formation of various diastereomeric piperazines. In Aspergillus flavus (strain ATCC 200026 / FGSC A1120 / IAM 13836 / NRRL 3357 / JCM 12722 / SRRC 167), this protein is NADP-dependent oxidoreductase lnbE.